We begin with the raw amino-acid sequence, 373 residues long: Caspase-4 (373 aa).

The interval 1-59 (MAENKHPDKPLKVLEQLGKEVLTEYLEKLVQSNVLKLKEEDKQKFNNAERSDKRWVFVD) is required for LPS-binding. A propeptide spanning residues 1–80 (MAENKHPDKP…MLLQTFFSVD (80 aa)) is cleaved from the precursor. Residues 1 to 91 (MAENKHPDKP…GSHHGEANLE (91 aa)) enclose the CARD domain. Ser83 is subject to Phosphoserine. Residues His206 and Cys254 contribute to the active site. The propeptide occupies 267 to 285 (SSKPQLCRGVDLPRNMEAD). Arg310 carries the post-translational modification (Microbial infection) ADP-riboxanated arginine.

This sequence belongs to the peptidase C14A family. In terms of assembly, heterotetramer that consists of two anti-parallel arranged heterodimers, each one formed by a 20 kDa (Caspase-4 subunit p20) and a 10 kDa (Caspase-4 subunit p10) subunit. Upon direct LPS-binding, forms large homooligomers, resulting in its activation. These oligomers are often referred to as 'non-canonical inflammasomes'. In its precursor form, interacts with TMEM214; this interaction is required for association with the endoplasmic reticulum membrane. Interacts with CASP1. Interacts with NOD2. Interacts with Serpinb1a, Serpinb1b and Serpinb1c; these interactions regulate CASP4 activity. As to quaternary structure, heterotetramer that consists of two anti-parallel arranged heterodimers, each one formed by a 20 kDa (Caspase-4 subunit p20) and a 10 kDa (Caspase-4 subunit p10) subunit. In response to activation signals, undergoes autoproteolytic cleavage and activation. In terms of processing, (Microbial infection) ADP-riboxanation by S.flexneri OspC3 blocks CASP4 autoprocessing, preventing CASP4 activation and ability to recognize and cleave GSDMD, thereby thwarting the inflammasome/pyroptosis-mediated defense. As to expression, widely expressed, including in thymus, lung and spleen (at protein level). Very low levels, if any, in the brain.

It localises to the cytoplasm. Its subcellular location is the cytosol. It is found in the endoplasmic reticulum membrane. The protein localises to the mitochondrion. The protein resides in the inflammasome. It localises to the secreted. It catalyses the reaction Strict requirement for Asp at the P1 position and has a preferred cleavage sequence of (Ile/Leu/Val/Phe)-Gly-His-Asp-|-.. With respect to regulation, activated by homooligomerization induced by direct binding to cytosolic LPS, in a TLR4-independent manner. In addition to LPS, CASP4/CASP11 may also be activated by oxidized phospholipid 1-palmitoyl-2-arachidonoyl- sn-glycero-3-phosphorylcholine, an oxidized phospholipid (oxPAPC), in dendritic cells, promoting adaptive immunity. The role of oxPAPC is however unclear and another report suggests that oxPAPC competes with LPS-binding and inhibits the non-canonical inflammasome in macrophages. In terms of biological role, inflammatory caspase that acts as the effector of the non-canonical inflammasome by mediating lipopolysaccharide (LPS)-induced pyroptosis. Also indirectly activates the NLRP3 and NLRP6 inflammasomes. Acts as a thiol protease that cleaves a tetrapeptide after an Asp residue at position P1: catalyzes cleavage of CGAS and GSDMD. In contrast to its human ortholog, does not cleave IL18. Effector of the non-canonical inflammasome independently of NLRP3 inflammasome and CASP1: the non-canonical inflammasome promotes pyroptosis through GSDMD cleavage without involving secretion of cytokine IL1B and IL18. In the non-canonical inflammasome, CASP4/CASP11 is activated by direct binding to the lipid A moiety of LPS without the need of an upstream sensor. LPS-binding promotes CASP4/CASP11 activation and CASP4/CASP11-mediated cleavage of GSDMD, followed by pyroptosis of infected cells and their extrusion into the gut lumen. Also indirectly promotes secretion of mature cytokines (IL1A, IL18 and HMGB1) downstream of GSDMD-mediated pyroptosis via activation of the NLRP3 and NLRP6 inflammasomes. Involved in NLRP3-dependent CASP1 activation and IL1B and IL18 secretion in response to non-canonical activators, such as UVB radiation or cholera enterotoxin. Involved in NLRP6 inflammasome-dependent activation in response to lipoteichoic acid (LTA), a cell-wall component of Gram-positive bacteria, which leads to CASP1 activation and IL1B and IL18 secretion. Involved in LPS-induced IL6 secretion; this activity may not require caspase enzymatic activity. The non-canonical inflammasome is required for innate immunity to cytosolic, but not vacuolar, bacteria. Plays a crucial role in the restriction of S.typhimurium replication in colonic epithelial cells during infection. Activation of the non-canonical inflammasome in brain endothelial cells can lead to excessive pyroptosis, leading to blood-brain barrier breakdown. Pyroptosis limits bacterial replication, while cytokine secretion promotes the recruitment and activation of immune cells and triggers mucosal inflammation. May also act as an activator of adaptive immunity in dendritic cells, following activation by oxidized phospholipid 1-palmitoyl-2-arachidonoyl- sn-glycero-3-phosphorylcholine, an oxidized phospholipid (oxPAPC). Cleavage of GSDMD is not strictly dependent on the consensus cleavage site but depends on an exosite interface on CASP4/CASP11 that recognizes and binds the Gasdermin-D, C-terminal (GSDMD-CT) part. In contrast, it does not directly process IL1B. During non-canonical inflammasome activation, cuts CGAS and may play a role in the regulation of antiviral innate immune activation. The polypeptide is Caspase-4 (Mus musculus (Mouse)).